Here is a 627-residue protein sequence, read N- to C-terminus: MACPF domain-containing protein At1g14780 (627 aa).

The region spanning 1 to 339 (MSRDGGDVIE…PPLMDLQYFL (339 aa)) is the MACPF domain.

Belongs to the complement C6/C7/C8/C9 (TC 1.C.39) family.

Functionally, negatively controls the salicylic acid (SA)-mediated pathway of programmed cell death in plant immunity. The protein is MACPF domain-containing protein At1g14780 of Arabidopsis thaliana (Mouse-ear cress).